Consider the following 84-residue polypeptide: Minor capsid protein P30 (84 aa).

As to quaternary structure, dimer.

It localises to the virion. Its function is as follows. Minor capsid protein essential for stable capsid assembly of complete particles. This Enterobacteria phage PRD1 (Bacteriophage PRD1) protein is Minor capsid protein P30 (XXX).